Consider the following 263-residue polypeptide: Trans-aconitate 2-methyltransferase (263 aa).

Belongs to the methyltransferase superfamily. Tam family.

The protein localises to the cytoplasm. The catalysed reaction is trans-aconitate + S-adenosyl-L-methionine = (E)-3-(methoxycarbonyl)pent-2-enedioate + S-adenosyl-L-homocysteine. Functionally, catalyzes the S-adenosylmethionine monomethyl esterification of trans-aconitate. In Mycobacterium marinum (strain ATCC BAA-535 / M), this protein is Trans-aconitate 2-methyltransferase.